The following is a 477-amino-acid chain: UDP-N-acetylmuramate--L-alanine ligase (477 aa).

122-128 (GTHGKTT) contacts ATP.

Belongs to the MurCDEF family.

The protein resides in the cytoplasm. It catalyses the reaction UDP-N-acetyl-alpha-D-muramate + L-alanine + ATP = UDP-N-acetyl-alpha-D-muramoyl-L-alanine + ADP + phosphate + H(+). The protein operates within cell wall biogenesis; peptidoglycan biosynthesis. Its function is as follows. Cell wall formation. The sequence is that of UDP-N-acetylmuramate--L-alanine ligase from Xylella fastidiosa (strain 9a5c).